A 416-amino-acid polypeptide reads, in one-letter code: MDLTNMGKAAKGAAFELATASTAQKNQALAIIADELEANSAAILAANAKDIELGREAGLTDALLDRLLLNEERLTGIANDVRNVISLNDPVGSEIDSKVLENGMSLSRRRVPLGVVGVIYEARPNVTIDIAALCLKTGNASILRGGKETFFSNMELVKVIQSALAKANLPAASVQYIEKPDRELVSQLLKLDDYVDMIIPRGGAGLHKMCKENSTIPVIIGGFGISHIFVDESADLEKSLNVVENSKVQRPSACNSLDTLLVHEKVAAKFLPMIVERMSDKVTFVAEPKAKALMAQATQIRDAVEGDFDTEWLSYTLGVKVVADVKEAIDHMRVHNASHSDAIMTNSLINSELFINSVGSAAVYVNAATRFTDGAQFGLGAEVAVSTQKLHARGPMGLEELTSYKWVGKANYLARS.

This sequence belongs to the gamma-glutamyl phosphate reductase family.

It localises to the cytoplasm. The enzyme catalyses L-glutamate 5-semialdehyde + phosphate + NADP(+) = L-glutamyl 5-phosphate + NADPH + H(+). Its pathway is amino-acid biosynthesis; L-proline biosynthesis; L-glutamate 5-semialdehyde from L-glutamate: step 2/2. Catalyzes the NADPH-dependent reduction of L-glutamate 5-phosphate into L-glutamate 5-semialdehyde and phosphate. The product spontaneously undergoes cyclization to form 1-pyrroline-5-carboxylate. The protein is Gamma-glutamyl phosphate reductase of Vibrio parahaemolyticus serotype O3:K6 (strain RIMD 2210633).